A 379-amino-acid chain; its full sequence is UDP-N-acetylglucosamine--N-acetylmuramyl-(pentapeptide) pyrophosphoryl-undecaprenol N-acetylglucosamine transferase (379 aa).

UDP-N-acetyl-alpha-D-glucosamine-binding positions include 17–19 (TGG), N128, R169, S197, and Q298.

Belongs to the glycosyltransferase 28 family. MurG subfamily.

The protein localises to the cell inner membrane. It catalyses the reaction di-trans,octa-cis-undecaprenyl diphospho-N-acetyl-alpha-D-muramoyl-L-alanyl-D-glutamyl-meso-2,6-diaminopimeloyl-D-alanyl-D-alanine + UDP-N-acetyl-alpha-D-glucosamine = di-trans,octa-cis-undecaprenyl diphospho-[N-acetyl-alpha-D-glucosaminyl-(1-&gt;4)]-N-acetyl-alpha-D-muramoyl-L-alanyl-D-glutamyl-meso-2,6-diaminopimeloyl-D-alanyl-D-alanine + UDP + H(+). The protein operates within cell wall biogenesis; peptidoglycan biosynthesis. Its function is as follows. Cell wall formation. Catalyzes the transfer of a GlcNAc subunit on undecaprenyl-pyrophosphoryl-MurNAc-pentapeptide (lipid intermediate I) to form undecaprenyl-pyrophosphoryl-MurNAc-(pentapeptide)GlcNAc (lipid intermediate II). This is UDP-N-acetylglucosamine--N-acetylmuramyl-(pentapeptide) pyrophosphoryl-undecaprenol N-acetylglucosamine transferase from Brucella melitensis biotype 2 (strain ATCC 23457).